Consider the following 115-residue polypeptide: Holo-[acyl-carrier-protein] synthase (115 aa).

Positions 6 and 51 each coordinate Mg(2+).

It belongs to the P-Pant transferase superfamily. AcpS family. Mg(2+) is required as a cofactor.

The protein localises to the cytoplasm. The catalysed reaction is apo-[ACP] + CoA = holo-[ACP] + adenosine 3',5'-bisphosphate + H(+). Functionally, transfers the 4'-phosphopantetheine moiety from coenzyme A to a Ser of acyl-carrier-protein. In Campylobacter jejuni subsp. doylei (strain ATCC BAA-1458 / RM4099 / 269.97), this protein is Holo-[acyl-carrier-protein] synthase.